We begin with the raw amino-acid sequence, 250 residues long: 1-(5-phosphoribosyl)-5-[(5-phosphoribosylamino)methylideneamino] imidazole-4-carboxamide isomerase (250 aa).

The active-site Proton acceptor is the Asp12. Asp134 serves as the catalytic Proton donor.

Belongs to the HisA/HisF family.

The protein localises to the cytoplasm. The catalysed reaction is 1-(5-phospho-beta-D-ribosyl)-5-[(5-phospho-beta-D-ribosylamino)methylideneamino]imidazole-4-carboxamide = 5-[(5-phospho-1-deoxy-D-ribulos-1-ylimino)methylamino]-1-(5-phospho-beta-D-ribosyl)imidazole-4-carboxamide. It participates in amino-acid biosynthesis; L-histidine biosynthesis; L-histidine from 5-phospho-alpha-D-ribose 1-diphosphate: step 4/9. This Actinobacillus pleuropneumoniae serotype 7 (strain AP76) protein is 1-(5-phosphoribosyl)-5-[(5-phosphoribosylamino)methylideneamino] imidazole-4-carboxamide isomerase.